Here is a 415-residue protein sequence, read N- to C-terminus: Ammonium transporter Rh type A (415 aa).

Residues 1 to 2 (MR) lie on the Cytoplasmic side of the membrane. Residues 3–23 (FIFPTIAVLLEASMIVLFGFF) form a helical membrane-spanning segment. Residues 24 to 51 (VKYETEQNAIQQPNSTNSTKVDRSLELY) lie on the Extracellular side of the membrane. 2 N-linked (GlcNAc...) asparagine glycosylation sites follow: Asn37 and Asn40. Residues 52–72 (PLFQDVHVMIFVGFGFLMTFL) form a helical membrane-spanning segment. The Cytoplasmic portion of the chain corresponds to 73-76 (KKYG). A helical membrane pass occupies residues 77 to 97 (FSSVGINLLIAALGLQWGTFV). The Extracellular portion of the chain corresponds to 98-115 (QGMVHRHGQTIYIGIKNM). A helical membrane pass occupies residues 116–136 (INADFSTATVLISFGAVLGKI). The Cytoplasmic segment spans residues 137 to 142 (SPTQML). A helical transmembrane segment spans residues 143-163 (IMTIIEITVFAGNEYVVGEIF). The Extracellular portion of the chain corresponds to 164 to 167 (QASD). A helical membrane pass occupies residues 168–188 (IGASMTIHAFGAYFGLAVAGV). Residues 189 to 208 (LYRTGLRKGHEKEESEYHSD) are Cytoplasmic-facing. A helical membrane pass occupies residues 209–229 (LFAMIGTLFLWMFWPSFNSAI). Residues 230–236 (AETAEEQ) lie on the Extracellular side of the membrane. A helical transmembrane segment spans residues 237 to 257 (YLAIINTYLSLVACVLTAYAM). Over 258–268 (SSLVGHRGKLD) the chain is Cytoplasmic. A helical membrane pass occupies residues 269-287 (MVHIQNATLAGGVAVGTCA). Residues 288–290 (DMK) lie on the Extracellular side of the membrane. The helical transmembrane segment at 291 to 311 (IHPYGSLIIGSIAGMVSVLGF) threads the bilayer. Residues 312–332 (RFLTPCLTAKLRIHDTCGVHN) lie on the Cytoplasmic side of the membrane. The chain crosses the membrane as a helical span at residues 333–353 (LHGLPGVVGGLSSIVAILLGV). Over 354-363 (STASSMTMQA) the chain is Extracellular. Residues 364 to 384 (AALGSSIGSAIAGGLITGLIL) traverse the membrane as a helical segment. Residues 385-415 (RFIVRGQPSKDNFFDDSVYWEVPKEKELDNV) lie on the Cytoplasmic side of the membrane.

It belongs to the ammonium transporter (TC 2.A.49) family. Rh subfamily. In terms of assembly, homodimer. Heterotrimer; a RHCE monomer interacts with a RHAG homodimer. Component of the ankyrin-1 complex in the erythrocyte, composed of ANK1, RHCE, RHAG, SLC4A1, EPB42, GYPA, GYPB and AQP1. Interacts with GYPB (via the N-terminal); this interaction bridges the (RHAG)2(RHCE) heterotrimer with the SLC4A1 Band 3 I dimer complexed with GYPA. Post-translationally, glycosylated.

Its subcellular location is the membrane. The enzyme catalyses methylamine(out) = methylamine(in). It carries out the reaction NH4(+)(in) = NH4(+)(out). The catalysed reaction is CO2(out) = CO2(in). In terms of biological role, component of the ankyrin-1 complex, a multiprotein complex involved in the stability and shape of the erythrocyte membrane. Heterotrimer with RHCE (RHAG)2(RHCE), that transports ammonium and its related derivative methylammonium, in both neutral and ionic forms, across the erythrocyte membrane. The transport of NH4(+) is electrogenic and masks the NH3 transport. Also, may act as a CO2 channel. Moreover in erythrocyte, regulates RHD membrane expression and is associated with rhesus blood group antigen expression. The protein is Ammonium transporter Rh type A of Canis lupus familiaris (Dog).